The following is a 512-amino-acid chain: Protein singed (512 aa).

It belongs to the fascin family. As to quaternary structure, interacts with Rab35, with stronger binding to the Rab35-GTP form compared to the Rab35-GDP form.

The protein localises to the cytoplasm. Its subcellular location is the cytoskeleton. Acts as an actin bundling protein. May have a role in the asymmetric organization and/or movement of cytoplasmic components. It has a role in somatic cells during the formation of adult bristles and hairs, and in the female germline during oogenesis. In Drosophila melanogaster (Fruit fly), this protein is Protein singed (sn).